A 754-amino-acid chain; its full sequence is 5-methyltetrahydropteroyltriglutamate--homocysteine methyltransferase (754 aa).

Residues R17 to K20 and K117 each bind 5-methyltetrahydropteroyltri-L-glutamate. Residues I431–S433 and E484 each bind L-homocysteine. Residues I431 to S433 and E484 contribute to the L-methionine site. 5-methyltetrahydropteroyltri-L-glutamate contacts are provided by residues R515–C516 and W561. Residue D599 coordinates L-homocysteine. D599 provides a ligand contact to L-methionine. E605 lines the 5-methyltetrahydropteroyltri-L-glutamate pocket. 3 residues coordinate Zn(2+): H641, C643, and E665. H694 functions as the Proton donor in the catalytic mechanism. C726 contacts Zn(2+).

The protein belongs to the vitamin-B12 independent methionine synthase family. The cofactor is Zn(2+).

The enzyme catalyses 5-methyltetrahydropteroyltri-L-glutamate + L-homocysteine = tetrahydropteroyltri-L-glutamate + L-methionine. It participates in amino-acid biosynthesis; L-methionine biosynthesis via de novo pathway; L-methionine from L-homocysteine (MetE route): step 1/1. In terms of biological role, catalyzes the transfer of a methyl group from 5-methyltetrahydrofolate to homocysteine resulting in methionine formation. In Salmonella paratyphi B (strain ATCC BAA-1250 / SPB7), this protein is 5-methyltetrahydropteroyltriglutamate--homocysteine methyltransferase.